Consider the following 204-residue polypeptide: Guanylate kinase (204 aa).

The Guanylate kinase-like domain maps to 3-181; sequence GTLYIVSASS…AVSEMSAIFT (179 aa). 10-17 is a binding site for ATP; it reads ASSGTGKS.

Belongs to the guanylate kinase family.

It is found in the cytoplasm. The enzyme catalyses GMP + ATP = GDP + ADP. Its function is as follows. Essential for recycling GMP and indirectly, cGMP. The protein is Guanylate kinase of Xylella fastidiosa (strain Temecula1 / ATCC 700964).